A 332-amino-acid polypeptide reads, in one-letter code: Glycerol-3-phosphate dehydrogenase [NAD(P)+] (332 aa).

4 residues coordinate NADPH: Ser11, Phe12, Arg32, and Lys106. Sn-glycerol 3-phosphate-binding residues include Lys106, Gly134, and Ser136. Residue Ala138 participates in NADPH binding. Sn-glycerol 3-phosphate is bound by residues Lys189, Asp242, Ser252, Arg253, and Asn254. The Proton acceptor role is filled by Lys189. Residue Arg253 coordinates NADPH. Val277 and Glu279 together coordinate NADPH.

This sequence belongs to the NAD-dependent glycerol-3-phosphate dehydrogenase family.

Its subcellular location is the cytoplasm. It carries out the reaction sn-glycerol 3-phosphate + NAD(+) = dihydroxyacetone phosphate + NADH + H(+). The enzyme catalyses sn-glycerol 3-phosphate + NADP(+) = dihydroxyacetone phosphate + NADPH + H(+). It participates in membrane lipid metabolism; glycerophospholipid metabolism. In terms of biological role, catalyzes the reduction of the glycolytic intermediate dihydroxyacetone phosphate (DHAP) to sn-glycerol 3-phosphate (G3P), the key precursor for phospholipid synthesis. In Clostridium acetobutylicum (strain ATCC 824 / DSM 792 / JCM 1419 / IAM 19013 / LMG 5710 / NBRC 13948 / NRRL B-527 / VKM B-1787 / 2291 / W), this protein is Glycerol-3-phosphate dehydrogenase [NAD(P)+].